We begin with the raw amino-acid sequence, 386 residues long: Succinyl-diaminopimelate desuccinylase (386 aa).

Residue H76 coordinates Zn(2+). D78 is a catalytic residue. Position 110 (D110) interacts with Zn(2+). Residue E144 is the Proton acceptor of the active site. The Zn(2+) site is built by E145, E173, and H359.

It belongs to the peptidase M20A family. DapE subfamily. In terms of assembly, homodimer. The cofactor is Zn(2+). Requires Co(2+) as cofactor.

It catalyses the reaction N-succinyl-(2S,6S)-2,6-diaminopimelate + H2O = (2S,6S)-2,6-diaminopimelate + succinate. It functions in the pathway amino-acid biosynthesis; L-lysine biosynthesis via DAP pathway; LL-2,6-diaminopimelate from (S)-tetrahydrodipicolinate (succinylase route): step 3/3. Functionally, catalyzes the hydrolysis of N-succinyl-L,L-diaminopimelic acid (SDAP), forming succinate and LL-2,6-diaminopimelate (DAP), an intermediate involved in the bacterial biosynthesis of lysine and meso-diaminopimelic acid, an essential component of bacterial cell walls. The protein is Succinyl-diaminopimelate desuccinylase of Chromohalobacter salexigens (strain ATCC BAA-138 / DSM 3043 / CIP 106854 / NCIMB 13768 / 1H11).